The primary structure comprises 263 residues: uncharacterized protein (263 aa).

7 consecutive transmembrane segments (helical) span residues 1-21 (MLVI…ILCQ), 38-58 (LFLL…HYCY), 82-102 (IPIS…CMMV), 118-138 (GISI…IFTY), 151-171 (GKFG…ANLL), 196-216 (FALI…VIPT), and 230-250 (FWVK…VQYV).

The protein resides in the membrane. This is an uncharacterized protein from Saccharomyces cerevisiae (strain ATCC 204508 / S288c) (Baker's yeast).